The following is a 171-amino-acid chain: MIGWLEAMLRVGRKLFVKAETQLYPEEKPKLYPRSRGRIVLTRDPDGQERCVACNLCAVVCPVGCIDLTKAVADDGRWYPEHFRINFARCIFCGFCEEACPTSAIQLTPDFELGEWRRDALVYEKHDLLISGEGKVRGYRYWSVAGKAIDGKDKGEAEHESPPVDLRGLLP.

4Fe-4S ferredoxin-type domains are found at residues 39-71 and 81-110; these read IVLT…LTKA and EHFR…LTPD. [4Fe-4S] cluster is bound by residues Cys51, Cys54, Cys57, Cys61, Cys90, Cys93, Cys96, and Cys100.

This sequence belongs to the complex I 23 kDa subunit family. As to quaternary structure, NDH-1 is composed of 14 different subunits. Subunits NuoA, H, J, K, L, M, N constitute the membrane sector of the complex. It depends on [4Fe-4S] cluster as a cofactor.

Its subcellular location is the cell inner membrane. It catalyses the reaction a quinone + NADH + 5 H(+)(in) = a quinol + NAD(+) + 4 H(+)(out). NDH-1 shuttles electrons from NADH, via FMN and iron-sulfur (Fe-S) centers, to quinones in the respiratory chain. The immediate electron acceptor for the enzyme in this species is believed to be ubiquinone. Couples the redox reaction to proton translocation (for every two electrons transferred, four hydrogen ions are translocated across the cytoplasmic membrane), and thus conserves the redox energy in a proton gradient. This chain is NADH-quinone oxidoreductase subunit I 1, found in Rhodopseudomonas palustris (strain BisB5).